We begin with the raw amino-acid sequence, 221 residues long: Intraflagellar transport-associated protein (221 aa).

Position 59 is a phosphoserine (S59).

In terms of assembly, interacts with IFT122; the interaction associates IFTAP with IFT-A complex.

In terms of biological role, seems to play a role in ciliary BBSome localization, maybe through interaction with IFT-A complex. This Homo sapiens (Human) protein is Intraflagellar transport-associated protein.